Consider the following 459-residue polypeptide: Nucleobindin-1 (459 aa).

The first 25 residues, 1 to 25 (MPTSVPRGAPFLLLPPLLMLSAVLA), serve as a signal peptide directing secretion. The residue at position 85 (serine 85) is a Phosphoserine. Threonine 147 is modified (phosphothreonine). The stretch at 149–217 (EARDLELLIQ…QQRRHREHPK (69 aa)) forms a coiled coil. A DNA-binding region spans residues 171 to 217 (HHEEFKRYEMLKEHERRRYLESLGEEQRKEAERKLQEQQRRHREHPK). A compositionally biased stretch (basic and acidic residues) spans 192 to 209 (SLGEEQRKEAERKLQEQQ). The segment at 192–220 (SLGEEQRKEAERKLQEQQRRHREHPKVNV) is disordered. The tract at residues 227–320 (LKEVWEELDG…VTLEEFLAST (94 aa)) is binds to GNAI2 and GNAI3. EF-hand domains are found at residues 239-274 (PNRFNPKTFFILHDINSDGVLDEQELEALFTKELEK) and 291-326 (ERLRMREHVMKNVDTNQDRLVTLEEFLASTQRKEFG). Aspartate 252, asparagine 254, aspartate 256, glutamate 263, aspartate 304, asparagine 306, aspartate 308, and glutamate 315 together coordinate Ca(2+). The GBA signature appears at 302 to 332 (NVDTNQDRLVTLEEFLASTQRKEFGETAEGW). The stretch at 340-407 (AYTEEELKRF…RKQQQQEQSA (68 aa)) forms a coiled coil. At serine 368 the chain carries Phosphoserine. The segment at 393 to 459 (LQMEQRKQQQ…VLPQLDSQHL (67 aa)) is disordered. Over residues 433–445 (DQKDVPASEKKVP) the composition is skewed to basic and acidic residues. Serine 456 is modified (phosphoserine).

Belongs to the nucleobindin family. As to quaternary structure, interacts (via GBA motif) with guanine nucleotide-binding protein G(i) alpha subunits GNAI1, GNAI2 and GNAI3 with higher affinity for GNAI1 and GNAI3 than for GNAI2. Preferentially interacts with inactive rather than active GNAI3. Interaction with GNAI3 is inhibited when NUCB1 binds calcium, probably due to a conformational change which renders the GBA motif inaccessible. In terms of tissue distribution, minor constituent of the mineralized matrix of bone. Detected in calvaria, rib cartilage, liver, kidney, spleen, brain, lung, skeletal and heart muscle with highest expression in calvaria and approximately half the amount in kidney, liver and brain.

The protein localises to the golgi apparatus. It is found in the cis-Golgi network membrane. Its subcellular location is the cytoplasm. The protein resides in the secreted. In terms of biological role, major calcium-binding protein of the Golgi which may have a role in calcium homeostasis. Acts as a non-receptor guanine nucleotide exchange factor which binds to and activates alpha subunits of guanine nucleotide-binding proteins (G proteins). The chain is Nucleobindin-1 (Nucb1) from Rattus norvegicus (Rat).